A 250-amino-acid chain; its full sequence is Small ribosomal subunit protein uS2 (250 aa).

The protein belongs to the universal ribosomal protein uS2 family.

The sequence is that of Small ribosomal subunit protein uS2 from Paraburkholderia phymatum (strain DSM 17167 / CIP 108236 / LMG 21445 / STM815) (Burkholderia phymatum).